The following is a 371-amino-acid chain: Phospho-N-acetylmuramoyl-pentapeptide-transferase (371 aa).

Helical transmembrane passes span 25 to 45 (TLLA…WLIA), 77 to 94 (MGGL…ALWA), 136 to 156 (IGWQ…HPAS), 172 to 192 (LIPH…IVGF), 204 to 224 (GLAI…AYVA), 240 to 260 (GTGE…AFLW), 269 to 289 (FMGD…AFMI), 296 to 316 (VIVG…VGVF), and 348 to 368 (KVVL…LATL).

It belongs to the glycosyltransferase 4 family. MraY subfamily. It depends on Mg(2+) as a cofactor.

The protein localises to the cell inner membrane. The enzyme catalyses UDP-N-acetyl-alpha-D-muramoyl-L-alanyl-gamma-D-glutamyl-meso-2,6-diaminopimeloyl-D-alanyl-D-alanine + di-trans,octa-cis-undecaprenyl phosphate = di-trans,octa-cis-undecaprenyl diphospho-N-acetyl-alpha-D-muramoyl-L-alanyl-D-glutamyl-meso-2,6-diaminopimeloyl-D-alanyl-D-alanine + UMP. It functions in the pathway cell wall biogenesis; peptidoglycan biosynthesis. Its function is as follows. Catalyzes the initial step of the lipid cycle reactions in the biosynthesis of the cell wall peptidoglycan: transfers peptidoglycan precursor phospho-MurNAc-pentapeptide from UDP-MurNAc-pentapeptide onto the lipid carrier undecaprenyl phosphate, yielding undecaprenyl-pyrophosphoryl-MurNAc-pentapeptide, known as lipid I. The sequence is that of Phospho-N-acetylmuramoyl-pentapeptide-transferase from Opitutus terrae (strain DSM 11246 / JCM 15787 / PB90-1).